A 178-amino-acid chain; its full sequence is Caveolin-1 (178 aa).

Position 2 is an N-acetylserine (Ser-2). A Phosphoserine modification is found at Ser-2. The segment at 2–94 (SGGKYVDSEG…WKASFTTFTV (93 aa)) is required for homooligomerization. Residues 2–104 (SGGKYVDSEG…TKYWFYRLLS (103 aa)) are Cytoplasmic-facing. N6-acetyllysine; alternate is present on Lys-5. A Glycyl lysine isopeptide (Lys-Gly) (interchain with G-Cter in ubiquitin); alternate cross-link involves residue Lys-5. Phosphotyrosine is present on Tyr-6. Position 9 is a phosphoserine (Ser-9). At Tyr-14 the chain carries Phosphotyrosine; by ABL1. Phosphotyrosine is present on Tyr-25. Glycyl lysine isopeptide (Lys-Gly) (interchain with G-Cter in ubiquitin) cross-links involve residues Lys-26, Lys-30, Lys-39, Lys-47, and Lys-57. The segment at 82–94 (DGIWKASFTTFTV) is interaction with CAVIN3. Positions 105–125 (ALFGIPMALIWGIYFAILSFL) form an intramembrane region, helical. Topologically, residues 126–178 (HIWAVVPCIKSFLIEIQCISRVYSIYVHTFCDPFFEAVGKIFSNIRINMQKEI) are cytoplasmic. The interacts with SPRY1, SPRY2, SPRY3 and SPRY4 stretch occupies residues 131–142 (VPCIKSFLIEIQ). Residues Cys-133, Cys-143, and Cys-156 are each lipidated (S-palmitoyl cysteine). The tract at residues 149–160 (SIYVHTFCDPFF) is interacts with SPRY1, SPRY2, and SPRY4. Residues 167-178 (FSNIRINMQKEI) form an interacts with SPRY1, SPRY2, SPRY3 and SPRY4 region.

It belongs to the caveolin family. As to quaternary structure, homooligomer. Interacts with GLIPR2. Interacts with NOSTRIN. Interacts with SNAP25 and STX1A. Interacts (via the N-terminus) with DPP4; the interaction is direct. Interacts with CTNNB1, CDH1 and JUP. Interacts with PACSIN2; this interaction induces membrane tubulation. Interacts with SLC7A9. Interacts with BMX and BTK. Interacts with TGFBR1. Interacts with CAVIN3 (via leucine-zipper domain) in a cholesterol-sensitive manner. Interacts with CAVIN1. Interacts with EHD2 in a cholesterol-dependent manner. Forms a ternary complex with UBXN6 and VCP; mediates CAV1 targeting to lysosomes for degradation. Interacts with ABCG1; this interaction regulates ABCG1-mediated cholesterol efflux. Interacts with NEU3; this interaction enhances NEU3 sialidase activity within caveola. Interacts (via C-terminus) with SPRY1, SPRY2 (via C-terminus), SPRY3, and SPRY4. Interacts with IGFBP5; this interaction allows trafficking of IGFBP5 from the plasma membrane to the nucleus. Post-translationally, phosphorylated at Tyr-14 by ABL1 in response to oxidative stress. Ubiquitinated. Undergo monoubiquitination and multi- and/or polyubiquitination. Monoubiquitination of N-terminal lysines promotes integration in a ternary complex with UBXN6 and VCP which promotes oligomeric CAV1 targeting to lysosomes for degradation. Ubiquitinated by ZNRF1; leading to degradation and modulation of the TLR4-mediated immune response.

Its subcellular location is the golgi apparatus membrane. The protein resides in the cell membrane. It is found in the membrane. The protein localises to the caveola. It localises to the membrane raft. Its function is as follows. May act as a scaffolding protein within caveolar membranes. Forms a stable heterooligomeric complex with CAV2 that targets to lipid rafts and drives caveolae formation. Mediates the recruitment of CAVIN proteins (CAVIN1/2/3/4) to the caveolae. Interacts directly with G-protein alpha subunits and can functionally regulate their activity. Involved in the costimulatory signal essential for T-cell receptor (TCR)-mediated T-cell activation. Its binding to DPP4 induces T-cell proliferation and NF-kappa-B activation in a T-cell receptor/CD3-dependent manner. Recruits CTNNB1 to caveolar membranes and may regulate CTNNB1-mediated signaling through the Wnt pathway. Negatively regulates TGFB1-mediated activation of SMAD2/3 by mediating the internalization of TGFBR1 from membrane rafts leading to its subsequent degradation. Binds 20(S)-hydroxycholesterol (20(S)-OHC). This is Caveolin-1 (CAV1) from Felis catus (Cat).